The chain runs to 244 residues: Protein A47 (244 aa).

This sequence belongs to the orthopoxvirus A47 protein family.

In Variola virus, this protein is Protein A47.